Here is a 332-residue protein sequence, read N- to C-terminus: GTP 3',8-cyclase (332 aa).

A Radical SAM core domain is found at 9–220 (RFARKVDYLR…DQVRERIAER (212 aa)). Arg18 is a GTP binding site. 2 residues coordinate [4Fe-4S] cluster: Cys25 and Cys29. Tyr31 serves as a coordination point for S-adenosyl-L-methionine. Cys32 contributes to the [4Fe-4S] cluster binding site. Arg67 lines the GTP pocket. An S-adenosyl-L-methionine-binding site is contributed by Gly71. Thr98 contacts GTP. An S-adenosyl-L-methionine-binding site is contributed by Ser122. Lys159 serves as a coordination point for GTP. Residue Met193 participates in S-adenosyl-L-methionine binding. [4Fe-4S] cluster contacts are provided by Cys258 and Cys261. 263–265 (RVR) is a GTP binding site. A [4Fe-4S] cluster-binding site is contributed by Cys275.

The protein belongs to the radical SAM superfamily. MoaA family. As to quaternary structure, monomer and homodimer. The cofactor is [4Fe-4S] cluster.

It carries out the reaction GTP + AH2 + S-adenosyl-L-methionine = (8S)-3',8-cyclo-7,8-dihydroguanosine 5'-triphosphate + 5'-deoxyadenosine + L-methionine + A + H(+). It participates in cofactor biosynthesis; molybdopterin biosynthesis. Catalyzes the cyclization of GTP to (8S)-3',8-cyclo-7,8-dihydroguanosine 5'-triphosphate. The protein is GTP 3',8-cyclase of Pseudomonas syringae pv. syringae (strain B728a).